The primary structure comprises 1023 residues: NLR family CARD domain-containing protein 4 (1023 aa).

One can recognise a CARD domain in the interval 1–88; it reads MNFIKENSQA…PVYQDLTGHS (88 aa). Residues 95 to 298 form a nucleotide-binding domain (NBD) region; sequence EEDLDVLAQS…HVGALTVEVG (204 aa). Residues 163 to 476 enclose the NACHT domain; the sequence is SPCLIEGESG…VSKGNSYLKK (314 aa). 169-176 is an ATP binding site; the sequence is GESGKGKS. The segment at 356–463 is winged-helix domain (WHD); sequence AHTQTMLFQT…RLSSLLKSRE (108 aa). Residue Ser533 is modified to Phosphoserine. LRR repeat units lie at residues 578–598, 655–678, 734–757, 761–784, 786–811, 823–846, 847–869, 877–901, 910–932, 935–962, 964–984, and 998–1020; these read FFQG…LFDF, MQKF…DIKY, VTDL…LADS, LKNL…SLAE, LRNL…DYIV, EMKL…LHNL, VKLS…ALQG, LEQL…LLKQ, KLGL…FLEM, LRDL…VFEN, KQLV…ALVR, and EARL…TFKL.

In terms of assembly, homooligomer; homooligomerizes following activation of Naip proteins by pathogenic proteins such as S.typhimurium (Salmonella) flagellin or PrgJ. Component of the NLRC4 inflammasome, at least composed of NLRC4, caspase-1 (CASP1) and some NAIP family member. Interacts with EIF2AK2/PKR. Phosphorylated at Ser-533 following infection of macrophages with S.typhimurium (Salmonella). Phosphorylation is essential for NLRC4 inflammasome function to promote caspase-1 activation and pyroptosis. PRKCD phosphorylates Ser-533 in vitro.

The protein localises to the cytoplasm. Its subcellular location is the cytosol. Its function is as follows. Key component of inflammasomes that indirectly senses specific proteins from pathogenic bacteria and fungi and responds by assembling an inflammasome complex that promotes caspase-1 activation, cytokine production and macrophage pyroptosis. The NLRC4 inflammasome is activated as part of the innate immune response to a range of intracellular bacteria. The polypeptide is NLR family CARD domain-containing protein 4 (Nlrc4) (Rattus norvegicus (Rat)).